Reading from the N-terminus, the 598-residue chain is Phospholipase B-like protein G (598 aa).

The signal sequence occupies residues 1-24 (MIKSYYLFFIILIFLIFINNFILC). Asn-50, Asn-98, Asn-173, Asn-341, Asn-368, Asn-450, Asn-480, Asn-526, and Asn-576 each carry an N-linked (GlcNAc...) asparagine glycan.

The protein belongs to the phospholipase B-like family.

Its subcellular location is the secreted. In terms of biological role, probable phospholipase. This Dictyostelium discoideum (Social amoeba) protein is Phospholipase B-like protein G (plbG).